Consider the following 248-residue polypeptide: 4-hydroxy-tetrahydrodipicolinate reductase (248 aa).

NAD(+) is bound by residues 8-13, 75-77, and 99-102; these read GAKGRM, GTT, and ATNM. Catalysis depends on H131, which acts as the Proton donor/acceptor. H132 is a binding site for (S)-2,3,4,5-tetrahydrodipicolinate. Catalysis depends on K135, which acts as the Proton donor. 141–142 is a (S)-2,3,4,5-tetrahydrodipicolinate binding site; sequence GT.

This sequence belongs to the DapB family.

The protein resides in the cytoplasm. It carries out the reaction (S)-2,3,4,5-tetrahydrodipicolinate + NAD(+) + H2O = (2S,4S)-4-hydroxy-2,3,4,5-tetrahydrodipicolinate + NADH + H(+). The enzyme catalyses (S)-2,3,4,5-tetrahydrodipicolinate + NADP(+) + H2O = (2S,4S)-4-hydroxy-2,3,4,5-tetrahydrodipicolinate + NADPH + H(+). It functions in the pathway amino-acid biosynthesis; L-lysine biosynthesis via DAP pathway; (S)-tetrahydrodipicolinate from L-aspartate: step 4/4. In terms of biological role, catalyzes the conversion of 4-hydroxy-tetrahydrodipicolinate (HTPA) to tetrahydrodipicolinate. The protein is 4-hydroxy-tetrahydrodipicolinate reductase of Campylobacter jejuni subsp. doylei (strain ATCC BAA-1458 / RM4099 / 269.97).